A 220-amino-acid polypeptide reads, in one-letter code: Large ribosomal subunit protein bL9 (220 aa).

The span at 167–184 (AAAEVEQAEDVAAAEQQD) shows a compositional bias: low complexity. The disordered stretch occupies residues 167 to 220 (AAAEVEQAEDVAAAEQQDSSPVDDHADDADGATGGEGRDEGAGDASDGEEMPST).

This sequence belongs to the bacterial ribosomal protein bL9 family.

In terms of biological role, binds to the 23S rRNA. This Anaplasma marginale (strain St. Maries) protein is Large ribosomal subunit protein bL9.